The primary structure comprises 261 residues: Proteasome subunit beta type-2 (261 aa).

A propeptide spans 1–29 (removed in mature form); sequence MAGLSFDNYQRNNFLAENSHTQPKATSTG. The active-site Nucleophile is the threonine 30.

The protein belongs to the peptidase T1B family. As to quaternary structure, the 26S proteasome consists of a 20S proteasome core and two 19S regulatory subunits. The 20S proteasome core is composed of 28 subunits that are arranged in four stacked rings, resulting in a barrel-shaped structure. The two end rings are each formed by seven alpha subunits, and the two central rings are each formed by seven beta subunits. The catalytic chamber with the active sites is on the inside of the barrel.

It localises to the cytoplasm. It is found in the nucleus. It catalyses the reaction Cleavage of peptide bonds with very broad specificity.. Its function is as follows. The proteasome degrades poly-ubiquitinated proteins in the cytoplasm and in the nucleus. It is essential for the regulated turnover of proteins and for the removal of misfolded proteins. The proteasome is a multicatalytic proteinase complex that is characterized by its ability to cleave peptides with Arg, Phe, Tyr, Leu, and Glu adjacent to the leaving group at neutral or slightly basic pH. It has an ATP-dependent proteolytic activity. The polypeptide is Proteasome subunit beta type-2 (PUP1) (Saccharomyces cerevisiae (strain ATCC 204508 / S288c) (Baker's yeast)).